The following is a 520-amino-acid chain: Probable helicase MJECL08 (520 aa).

Residues Arg162, 171-176, and 501-502 each bind ATP; these read GAGKSN and KI.

Belongs to the HerA family.

It carries out the reaction Couples ATP hydrolysis with the unwinding of duplex DNA at the replication fork by translocating in the 5'-3' direction. This creates two antiparallel DNA single strands (ssDNA). The leading ssDNA polymer is the template for DNA polymerase III holoenzyme which synthesizes a continuous strand.. The catalysed reaction is ATP + H2O = ADP + phosphate + H(+). The enzyme catalyses Couples ATP hydrolysis with the unwinding of duplex DNA by translocating in the 3'-5' direction.. In terms of biological role, a probably bidirectional DNA helicase. The polypeptide is Probable helicase MJECL08 (Methanocaldococcus jannaschii (strain ATCC 43067 / DSM 2661 / JAL-1 / JCM 10045 / NBRC 100440) (Methanococcus jannaschii)).